Reading from the N-terminus, the 320-residue chain is GRAM domain-containing protein 2A (320 aa).

The segment at Thr-33–Gly-56 is disordered. The 68-residue stretch at Gln-74–Lys-141 folds into the GRAM domain. The helical transmembrane segment at Leu-278–Phe-298 threads the bilayer.

Post-translationally, phosphorylated.

It localises to the endoplasmic reticulum membrane. The protein resides in the cell membrane. Participates in the organization ofendoplasmic reticulum-plasma membrane contact sites (EPCS) with pleiotropic functions including STIM1 recruitment and calcium homeostasis. Constitutive tether that co-localize with ESYT2/3 tethers at endoplasmic reticulum-plasma membrane contact sites in a phosphatidylinositol lipid-dependent manner. Pre-marks the subset of phosphtidylinositol 4,5-biphosphate (PI(4,5)P2)-enriched EPCS destined for the store operated calcium entry pathway (SOCE). In Mus musculus (Mouse), this protein is GRAM domain-containing protein 2A.